The primary structure comprises 234 residues: Large ribosomal subunit protein uL1 (234 aa).

Belongs to the universal ribosomal protein uL1 family. Part of the 50S ribosomal subunit.

Binds directly to 23S rRNA. The L1 stalk is quite mobile in the ribosome, and is involved in E site tRNA release. Its function is as follows. Protein L1 is also a translational repressor protein, it controls the translation of the L11 operon by binding to its mRNA. In Helicobacter hepaticus (strain ATCC 51449 / 3B1), this protein is Large ribosomal subunit protein uL1.